We begin with the raw amino-acid sequence, 1007 residues long: Protein vav-1 (1007 aa).

The Calponin-homology (CH) domain occupies 37-151 (CDLWIGCARW…TLSFLSHTKE (115 aa)). Residues 151-239 (ESLSRGVDPF…ENDLQNTPTL (89 aa)) are AC. The disordered stretch occupies residues 153-176 (LSRGVDPFPDTDNNQEGTSNGSEF). Positions 163–174 (TDNNQEGTSNGS) are enriched in polar residues. Phosphotyrosine occurs at positions 183, 200, and 217. The region spanning 240–437 (KRNRCIRELY…EDVCNYINEE (198 aa)) is the DH domain. The 129-residue stretch at 470 to 598 (RVNLDGEVKM…WMTALLLSKS (129 aa)) folds into the PH domain. The Phorbol-ester/DAG-type zinc finger occupies 610–664 (NHKVAFHSFRVDVKNPATCDVCDKLMKGLQYQGYKCESCNMSMHKECLGLKKCEA). The SH3 1 domain occupies 688–750 (HEGDIVVANS…HLDHVSQSRT (63 aa)). The segment at 778 to 817 (LPNKLLSDGSSRSLSGPHGSRSSRNSSSSTINGSMDSVPR) is disordered. Positions 782–814 (LLSDGSSRSLSGPHGSRSSRNSSSSTINGSMDS) are enriched in low complexity. One can recognise an SH2 domain in the interval 831–925 (WYMGEMERAK…ALDTCLKNPY (95 aa)). The SH3 2 domain maps to 926–991 (SQCKVFKAVH…PLSYVKPYDP (66 aa)).

Post-translationally, GEF activity is regulated by phosphorylation on tyrosine residues. Strong expression in the pharynx, proximal gonad, spermatheca, intestine and rectal epithelia.

In terms of biological role, acts as a guanine nucleotide exchange factor (GEF) for Rho GTPase. Has a critical roles in the generation of rhythmic behaviors: feeding, defecation and ovulation by dynamically regulating the concentration of intracellular calcium. Plays a role in male tail tip morphogenesis. The protein is Protein vav-1 of Caenorhabditis elegans.